The sequence spans 298 residues: Cyclin-dependent kinase 2 (298 aa).

Residue Met1 is modified to N-acetylmethionine. The 283-residue stretch at 4-286 folds into the Protein kinase domain; it reads FQKVEKIGEG…AKAALAHPFF (283 aa). Position 6 is an N6-acetyllysine (Lys6). An ATP-binding site is contributed by 10–18; it reads IGEGTYGVV. Thr14 carries the post-translational modification Phosphothreonine. Residue Tyr15 is modified to Phosphotyrosine; by WEE1. Tyr19 carries the phosphotyrosine modification. ATP contacts are provided by residues Lys33, 81-83, and Asp86; that span reads EFL. Asp127 functions as the Proton acceptor in the catalytic mechanism. ATP contacts are provided by residues 129-132 and Asp145; that span reads KPQN. Positions 132 and 145 each coordinate Mg(2+). Phosphothreonine; by CAK and CCRK is present on Thr160.

This sequence belongs to the protein kinase superfamily. CMGC Ser/Thr protein kinase family. CDC2/CDKX subfamily. As to quaternary structure, found in a complex with CABLES1, CCNA1 and CCNE1. Interacts with CABLES1. Interacts with UHRF2. Part of a complex consisting of UHRF2, CDK2 and CCNE1. Interacts with the Speedy/Ringo proteins SPDYA and SPDYC. Interaction with SPDYA promotes kinase activation via a conformation change that alleviates obstruction of the substrate-binding cleft by the T-loop. Found in a complex with both SPDYA and CDKN1B/KIP1. Binds to RB1 and CDK7. Binding to CDKN1A (p21) leads to CDK2/cyclin E inactivation at the G1-S phase DNA damage checkpoint, thereby arresting cells at the G1-S transition during DNA repair. Associated with PTPN6 and beta-catenin/CTNNB1. Interacts with CACUL1. May interact with CEP63. Interacts with ANKRD17. Interacts with CEBPA (when phosphorylated). Forms a ternary complex with CCNA2 and CDKN1B; CDKN1B inhibits the kinase activity of CDK2 through conformational rearrangements. Interacts with cyclins A, B1, B3, D, or E. Interacts with CDK2AP2. Mg(2+) is required as a cofactor. Post-translationally, phosphorylated at Thr-160 by CDK7 in a CAK complex. Phosphorylation at Thr-160 promotes kinase activity, whereas phosphorylation at Tyr-15 by WEE1 reduces slightly kinase activity. Phosphorylated on Thr-14 and Tyr-15 during S and G2 phases before being dephosphorylated by CDC25A. Nitrosylated after treatment with nitric oxide (DETA-NO).

The protein localises to the cytoplasm. The protein resides in the cytoskeleton. Its subcellular location is the microtubule organizing center. It is found in the centrosome. It localises to the nucleus. The protein localises to the cajal body. The protein resides in the endosome. The catalysed reaction is L-seryl-[protein] + ATP = O-phospho-L-seryl-[protein] + ADP + H(+). The enzyme catalyses L-threonyl-[protein] + ATP = O-phospho-L-threonyl-[protein] + ADP + H(+). With respect to regulation, phosphorylation at Thr-14 or Tyr-15 inactivates the enzyme, while phosphorylation at Thr-160 activates it. Inhibited by 1,25-dihydroxyvitamin D(3) (1,25-(OH)(2)D(3)), AG-024322, N-(4-Piperidinyl)-4-(2,6-dichlorobenzoylamino)-1H-pyrazole-3-carboxamide (AT7519), R547 (Ro-4584820), purine, pyrimidine and pyridine derivatives, 2-aminopyrimidines, paullones, thiazo derivatives, macrocyclic quinoxalin-2-one, pyrazolo[1,5-a]-1,3,5-triazine, pyrazolo[1,5-a]pyrimidine, 2-(1-ethyl-2-hydroxyethylamino)-6-benzylamino-9-isopropylpurine (roscovitine, seliciclib and CYC202), SNS-032 (BMS-387032), triazolo[1,5-a]pyrimidines, staurosporine and olomoucine. Stimulated by MYC. Inactivated by CDKN1A (p21). Serine/threonine-protein kinase involved in the control of the cell cycle; essential for meiosis, but dispensable for mitosis. Phosphorylates CABLES1, CTNNB1, CDK2AP2, ERCC6, NBN, USP37, p53/TP53, NPM1, CDK7, RB1, BRCA2, MYC, NPAT, EZH2. Triggers duplication of centrosomes and DNA. Acts at the G1-S transition to promote the E2F transcriptional program and the initiation of DNA synthesis, and modulates G2 progression; controls the timing of entry into mitosis/meiosis by controlling the subsequent activation of cyclin B/CDK1 by phosphorylation, and coordinates the activation of cyclin B/CDK1 at the centrosome and in the nucleus. Crucial role in orchestrating a fine balance between cellular proliferation, cell death, and DNA repair in embryonic stem cells (ESCs). Activity of CDK2 is maximal during S phase and G2; activated by interaction with cyclin E during the early stages of DNA synthesis to permit G1-S transition, and subsequently activated by cyclin A2 (cyclin A1 in germ cells) during the late stages of DNA replication to drive the transition from S phase to mitosis, the G2 phase. EZH2 phosphorylation promotes H3K27me3 maintenance and epigenetic gene silencing. Cyclin E/CDK2 prevents oxidative stress-mediated Ras-induced senescence by phosphorylating MYC. Involved in G1-S phase DNA damage checkpoint that prevents cells with damaged DNA from initiating mitosis; regulates homologous recombination-dependent repair by phosphorylating BRCA2, this phosphorylation is low in S phase when recombination is active, but increases as cells progress towards mitosis. In response to DNA damage, double-strand break repair by homologous recombination a reduction of CDK2-mediated BRCA2 phosphorylation. Involved in regulation of telomere repair by mediating phosphorylation of NBN. Phosphorylation of RB1 disturbs its interaction with E2F1. NPM1 phosphorylation by cyclin E/CDK2 promotes its dissociates from unduplicated centrosomes, thus initiating centrosome duplication. Cyclin E/CDK2-mediated phosphorylation of NPAT at G1-S transition and until prophase stimulates the NPAT-mediated activation of histone gene transcription during S phase. Required for vitamin D-mediated growth inhibition by being itself inactivated. Involved in the nitric oxide- (NO) mediated signaling in a nitrosylation/activation-dependent manner. USP37 is activated by phosphorylation and thus triggers G1-S transition. CTNNB1 phosphorylation regulates insulin internalization. Phosphorylates FOXP3 and negatively regulates its transcriptional activity and protein stability. Phosphorylates ERCC6 which is essential for its chromatin remodeling activity at DNA double-strand breaks. Acts as a regulator of the phosphatidylinositol 3-kinase/protein kinase B signal transduction by mediating phosphorylation of the C-terminus of protein kinase B (PKB/AKT1 and PKB/AKT2), promoting its activation. This Homo sapiens (Human) protein is Cyclin-dependent kinase 2 (CDK2).